The sequence spans 1075 residues: Carbamoyl phosphate synthase large chain (1075 aa).

Residues 1-403 are carboxyphosphate synthetic domain; that stretch reads MPKRTDINTI…SLQKALRGLE (403 aa). Residues R129, R169, G175, G176, Q208, V210, E215, G241, V242, H243, Q285, and E299 each contribute to the ATP site. Residues 133–328 form the ATP-grasp 1 domain; the sequence is KDAMTKIGLN…IAKVAAKLAV (196 aa). Positions 285, 299, and 301 each coordinate Mg(2+). Residues Q285, E299, and N301 each contribute to the Mn(2+) site. The interval 404–548 is oligomerization domain; sequence IGICGFNLRS…YSTYEDECEA (145 aa). Residues 549–930 are carbamoyl phosphate synthetic domain; sequence KPTTRQKVMI…AYYKAQLGAG (382 aa). In terms of domain architecture, ATP-grasp 2 spans 673–864; the sequence is QKILTDLGLK…LAKIAALVMA (192 aa). ATP contacts are provided by R709, H748, L750, E755, G780, I781, H782, S783, Q823, and E835. Mg(2+) contacts are provided by Q823, E835, and N837. The Mn(2+) site is built by Q823, E835, and N837. The MGS-like domain maps to 931-1070; it reads ERIPSTGKVF…QQLHLSSALA (140 aa). Positions 931–1075 are allosteric domain; sequence ERIPSTGKVF…SSALANQITR (145 aa).

It belongs to the CarB family. Composed of two chains; the small (or glutamine) chain promotes the hydrolysis of glutamine to ammonia, which is used by the large (or ammonia) chain to synthesize carbamoyl phosphate. Tetramer of heterodimers (alpha,beta)4. Mg(2+) serves as cofactor. Requires Mn(2+) as cofactor.

It carries out the reaction hydrogencarbonate + L-glutamine + 2 ATP + H2O = carbamoyl phosphate + L-glutamate + 2 ADP + phosphate + 2 H(+). The enzyme catalyses hydrogencarbonate + NH4(+) + 2 ATP = carbamoyl phosphate + 2 ADP + phosphate + 2 H(+). It functions in the pathway amino-acid biosynthesis; L-arginine biosynthesis; carbamoyl phosphate from bicarbonate: step 1/1. It participates in pyrimidine metabolism; UMP biosynthesis via de novo pathway; (S)-dihydroorotate from bicarbonate: step 1/3. Its function is as follows. Large subunit of the glutamine-dependent carbamoyl phosphate synthetase (CPSase). CPSase catalyzes the formation of carbamoyl phosphate from the ammonia moiety of glutamine, carbonate, and phosphate donated by ATP, constituting the first step of 2 biosynthetic pathways, one leading to arginine and/or urea and the other to pyrimidine nucleotides. The large subunit (synthetase) binds the substrates ammonia (free or transferred from glutamine from the small subunit), hydrogencarbonate and ATP and carries out an ATP-coupled ligase reaction, activating hydrogencarbonate by forming carboxy phosphate which reacts with ammonia to form carbamoyl phosphate. This Haemophilus ducreyi (strain 35000HP / ATCC 700724) protein is Carbamoyl phosphate synthase large chain.